We begin with the raw amino-acid sequence, 288 residues long: Zinc finger protein ZAT9 (288 aa).

Residues 4–26 (YKCRVCFKSFVNGKALGGHMRSH) form a C2H2-type 1 zinc finger. Disordered regions lie at residues 20 to 82 (GGHM…LTRK), 101 to 123 (SQLG…DTTT), and 189 to 210 (GGHR…QRSE). The span at 37 to 52 (PSQLSYETESDVSSSD) shows a compositional bias: polar residues. C2H2-type zinc fingers lie at residues 173–195 (YKCE…RASH) and 224–246 (HECP…KRSH).

It is found in the nucleus. Functionally, probable transcription factor that may be involved in stress responses. The chain is Zinc finger protein ZAT9 (ZAT9) from Arabidopsis thaliana (Mouse-ear cress).